Consider the following 294-residue polypeptide: 4-hydroxy-tetrahydrodipicolinate synthase (294 aa).

Thr44 is a binding site for pyruvate. The active-site Proton donor/acceptor is Tyr132. Residue Lys161 is the Schiff-base intermediate with substrate of the active site. Ile203 provides a ligand contact to pyruvate.

This sequence belongs to the DapA family. Homotetramer; dimer of dimers.

Its subcellular location is the cytoplasm. It carries out the reaction L-aspartate 4-semialdehyde + pyruvate = (2S,4S)-4-hydroxy-2,3,4,5-tetrahydrodipicolinate + H2O + H(+). It functions in the pathway amino-acid biosynthesis; L-lysine biosynthesis via DAP pathway; (S)-tetrahydrodipicolinate from L-aspartate: step 3/4. Its function is as follows. Catalyzes the condensation of (S)-aspartate-beta-semialdehyde [(S)-ASA] and pyruvate to 4-hydroxy-tetrahydrodipicolinate (HTPA). This Aquifex aeolicus (strain VF5) protein is 4-hydroxy-tetrahydrodipicolinate synthase.